The primary structure comprises 258 residues: Phosphoprotein ECPP44 (258 aa).

Disordered regions lie at residues 1–25, 46–131, and 148–175; these read MASD…DRGL, EKVQ…PVEV, and KLPG…VDCA. Basic and acidic residues-rich tracts occupy residues 11–25, 46–80, 109–124, and 148–158; these read SVEK…DRGL, EKVQ…EKLH, GLKE…KEED, and KLPGGGKKVEE.

Belongs to the plant dehydrin family. Post-translationally, phosphorylated in embryogenic and somatic embryos. Not phosphorylated in non-embryogenic cells.

Its function is as follows. Phosphorylation of ECCP44 protein is thought to be involved in the acquisition of embryogenic competence. Unlike other dehydrins, it is not thought to function as an environmental stress tolerant. The polypeptide is Phosphoprotein ECPP44 (ECPP44) (Daucus carota (Wild carrot)).